Reading from the N-terminus, the 348-residue chain is Galanin receptor type 1 (348 aa).

Residues 1–34 lie on the Extracellular side of the membrane; that stretch reads MELAMVNLSEGNGSDPEPPAPESRPLFGIGVENF. 2 N-linked (GlcNAc...) asparagine glycosylation sites follow: Asn-7 and Asn-12. Residues 35–55 form a helical membrane-spanning segment; it reads ITLVVFGLIFAMGVLGNSLVI. Residues 56–70 lie on the Cytoplasmic side of the membrane; the sequence is TVLARSKPGKPRSTT. A helical transmembrane segment spans residues 71–91; the sequence is NLFILNLSIADLAYLLFCIPF. The Extracellular portion of the chain corresponds to 92 to 109; the sequence is QATVYALPTWVLGAFICK. Cysteines 108 and 186 form a disulfide. A helical membrane pass occupies residues 110-131; that stretch reads FIHYFFTVSMLVSIFTLAAMSV. The Cytoplasmic portion of the chain corresponds to 132–151; that stretch reads DRYVAIVHSRRSSSLRVSRN. The helical transmembrane segment at 152–172 threads the bilayer; that stretch reads ALLGVGFIWALSIAMASPVAY. Residues 173-197 are Extracellular-facing; that stretch reads HQRLFHRDSNQTFCWEQWPNKLHKK. Asn-182 carries an N-linked (GlcNAc...) asparagine glycan. A helical transmembrane segment spans residues 198-218; sequence AYVVCTFVFGYLLPLLLICFC. At 219-247 the chain is on the cytoplasmic side; sequence YAKVLNHLHKKLKNMSKKSEASKKKTAQT. A helical membrane pass occupies residues 248–268; sequence VLVVVVVFGISWLPHHVVHLW. At 269-270 the chain is on the extracellular side; the sequence is AE. A helical transmembrane segment spans residues 271 to 291; the sequence is FGAFPLTPASFFFRITAHCLA. Residues 292-348 are Cytoplasmic-facing; the sequence is YSNSSVNPIIYAFLSENFRKAYKQVFKCHVCDESPRSETKENKSRMDTPPSTNCTHV. Cys-319 carries the S-palmitoyl cysteine lipid modification. Positions 328–337 are enriched in basic and acidic residues; sequence SETKENKSRM. A disordered region spans residues 328-348; the sequence is SETKENKSRMDTPPSTNCTHV.

It belongs to the G-protein coupled receptor 1 family. Interacts with GRP39 AND HTR1A. In terms of processing, three cysteine residues are found in the C-terminus, at least one of which may be palmitoylated. Expression is detected in brain, spinal cord, heart and skeletal muscle.

Its subcellular location is the cell membrane. Its function is as follows. Receptor for the hormone galanin. The activity of this receptor is mediated by G proteins that inhibit adenylate cyclase activity. The chain is Galanin receptor type 1 (Galr1) from Mus musculus (Mouse).